The following is a 605-amino-acid chain: Capsid scaffolding protein (605 aa).

Catalysis depends on charge relay system residues histidine 48, serine 116, and histidine 139. The segment at 235–274 is disordered; the sequence is ASDAPDLQKPDKALQSPPPASTDPATMLSGNAGEGATACG. The segment at 281 to 300 is interaction with pAP; that stretch reads QDLISVPRNTFMTLLQTNLD. Disordered regions lie at residues 403 to 432 and 489 to 588; these read DYVPAPSRSNKRKRDPEEDEEGGGLFPGED and PHQS…KSVS. Residues 410-416 carry the Nuclear localization signal motif; sequence RSNKRKR. A compositionally biased stretch (polar residues) spans 568 to 579; that stretch reads ASASGVAQSKEP. An interaction with major capsid protein region spans residues 585 to 605; that stretch reads KSVSAHLKSIFCEELLNKRVA.

The protein belongs to the herpesviridae capsid scaffolding protein family. As to quaternary structure, homomultimer. Interacts with major capsid protein. In terms of assembly, exists in a monomer-dimer equilibrium with the dimer being the active species. Post-translationally, capsid scaffolding protein is cleaved by assemblin after formation of the spherical procapsid. As a result, the capsid obtains its mature, icosahedral shape. Cleavages occur at two or more sites: release (R-site) and maturation (M-site).

The protein resides in the host cytoplasm. It is found in the host nucleus. The enzyme catalyses Cleaves -Ala-|-Ser- and -Ala-|-Ala- bonds in the scaffold protein.. Acts as a scaffold protein by binding major capsid protein in the cytoplasm, inducing the nuclear localization of both proteins. Multimerizes in the nucleus such as major capsid protein forms the icosahedral T=16 capsid. Autocatalytic cleavage releases the assembly protein, and subsequently abolishes interaction with major capsid protein. Cleavages products are evicted from the capsid before or during DNA packaging. Its function is as follows. Protease that plays an essential role in virion assembly within the nucleus. Catalyzes the cleavage of the assembly protein after formation of the spherical procapsid. By that cleavage, the capsid matures and gains its icosahedral shape. The cleavage sites seem to include -Ala-Ser-, -Ala-Ala-, as well as Ala-Thr bonds. Assemblin and cleavages products are evicted from the capsid before or during DNA packaging. Functionally, plays a major role in capsid assembly. Acts as a scaffold protein by binding major capsid protein. Multimerizes in the nucleus such as major capsid protein forms the icosahedral T=16 capsid. Cleaved by assemblin after capsid completion. The cleavages products are evicted from the capsid before or during DNA packaging. This chain is Capsid scaffolding protein, found in Homo sapiens (Human).